A 4318-amino-acid polypeptide reads, in one-letter code: Cytoplasmic dynein 2 heavy chain 1 (4318 aa).

Residues 1-1658 (MPAEDARKEY…IMRMVDAEFQ (1658 aa)) form a stem region. 147–154 (LKSLVRKQ) is a binding site for ATP. Coiled-coil stretches lie at residues 1328-1354 (DKAT…QRKW) and 1402-1431 (LRTT…RSIL). AAA stretches follow at residues 1659 to 1883 (YTYE…VLRG), 1951 to 2171 (DAIR…RQGD), 2261 to 2515 (ASDF…WVLG), and 2623 to 2871 (TFAR…SSSV). 1697 to 1704 (GPAGTGKT) lines the ATP pocket. Residues 1959–1986 (EHNLVVMETQVKKALELYEQLRQRMGVV) adopt a coiled-coil conformation. ATP-binding positions include 1989–1996 (GPSGSGKS), 2301–2308 (GPDGCGKG), and 2661–2668 (GRSGVGRR). The tract at residues 2888-3176 (DVYRRKKQGV…YELEKEQETI (289 aa)) is stalk. Coiled coils occupy residues 2908-2989 (VAKL…AEIE) and 3423-3480 (QHEK…KTKE). AAA regions lie at residues 3251–3487 (LSTE…TITQ) and 3699–3914 (MTFF…IIDR).

The protein belongs to the dynein heavy chain family. In terms of assembly, the cytoplasmic dynein complex 2 is probably composed by a heavy chain DYH1B homodimer and a number of light intermediate chains.

It is found in the cytoplasm. The protein localises to the cytoskeleton. Its subcellular location is the cilium axoneme. It localises to the cell membrane. May function as a motor for intraflagellar retrograde transport. Functions in cilia biogenesis. This Tripneustes gratilla (Hawaian sea urchin) protein is Cytoplasmic dynein 2 heavy chain 1 (DYH1B).